A 488-amino-acid polypeptide reads, in one-letter code: Glutamate--tRNA ligase (488 aa).

A 'HIGH' region motif is present at residues 16-26; sequence PSPTGEPHVGT. The 'KMSKS' region signature appears at 257 to 261; that stretch reads KLSKR. Lys260 serves as a coordination point for ATP.

Belongs to the class-I aminoacyl-tRNA synthetase family. Glutamate--tRNA ligase type 1 subfamily. Monomer.

The protein resides in the cytoplasm. It catalyses the reaction tRNA(Glu) + L-glutamate + ATP = L-glutamyl-tRNA(Glu) + AMP + diphosphate. Functionally, catalyzes the attachment of glutamate to tRNA(Glu) in a two-step reaction: glutamate is first activated by ATP to form Glu-AMP and then transferred to the acceptor end of tRNA(Glu). The chain is Glutamate--tRNA ligase from Rhizobium etli (strain ATCC 51251 / DSM 11541 / JCM 21823 / NBRC 15573 / CFN 42).